The chain runs to 512 residues: Cytochrome P450 72A11 (512 aa).

The helical transmembrane segment at 2-22 (EISVASVTVSVAVVVVSWWVW) threads the bilayer. Cysteine 460 is a heme binding site.

This sequence belongs to the cytochrome P450 family. It depends on heme as a cofactor.

Its subcellular location is the membrane. The polypeptide is Cytochrome P450 72A11 (CYP72A11) (Arabidopsis thaliana (Mouse-ear cress)).